The sequence spans 472 residues: Aspartyl/glutamyl-tRNA(Asn/Gln) amidotransferase subunit B (472 aa).

It belongs to the GatB/GatE family. GatB subfamily. In terms of assembly, heterotrimer of A, B and C subunits.

It carries out the reaction L-glutamyl-tRNA(Gln) + L-glutamine + ATP + H2O = L-glutaminyl-tRNA(Gln) + L-glutamate + ADP + phosphate + H(+). The enzyme catalyses L-aspartyl-tRNA(Asn) + L-glutamine + ATP + H2O = L-asparaginyl-tRNA(Asn) + L-glutamate + ADP + phosphate + 2 H(+). Its function is as follows. Allows the formation of correctly charged Asn-tRNA(Asn) or Gln-tRNA(Gln) through the transamidation of misacylated Asp-tRNA(Asn) or Glu-tRNA(Gln) in organisms which lack either or both of asparaginyl-tRNA or glutaminyl-tRNA synthetases. The reaction takes place in the presence of glutamine and ATP through an activated phospho-Asp-tRNA(Asn) or phospho-Glu-tRNA(Gln). This chain is Aspartyl/glutamyl-tRNA(Asn/Gln) amidotransferase subunit B, found in Campylobacter jejuni (strain RM1221).